Here is a 783-residue protein sequence, read N- to C-terminus: Probable galactinol--sucrose galactosyltransferase 5 (783 aa).

Phosphoserine occurs at positions 9 and 11.

Belongs to the glycosyl hydrolases 36 family.

The enzyme catalyses alpha-D-galactosyl-(1-&gt;3)-1D-myo-inositol + sucrose = raffinose + myo-inositol. Its function is as follows. Transglycosidase operating by a ping-pong reaction mechanism. Involved in the synthesis of raffinose, a major soluble carbohydrate in seeds, roots and tubers. The chain is Probable galactinol--sucrose galactosyltransferase 5 (RFS5) from Arabidopsis thaliana (Mouse-ear cress).